The chain runs to 101 residues: Small ribosomal subunit protein uS14 (101 aa).

Belongs to the universal ribosomal protein uS14 family. In terms of assembly, part of the 30S ribosomal subunit. Contacts proteins S3 and S10.

Its function is as follows. Binds 16S rRNA, required for the assembly of 30S particles and may also be responsible for determining the conformation of the 16S rRNA at the A site. This is Small ribosomal subunit protein uS14 from Klebsiella pneumoniae (strain 342).